The primary structure comprises 135 residues: FK506-binding protein 2 (135 aa).

Positions 1–20 (MRVPIITTLLTLALTGLSQA) are cleaved as a signal peptide. A PPIase FKBP-type domain is found at 40 to 128 (GDTVKMHYRG…IFQTELLEIE (89 aa)). The short motif at 132–135 (KDEL) is the Prevents secretion from ER element.

Belongs to the FKBP-type PPIase family. FKBP2 subfamily.

It localises to the endoplasmic reticulum. It carries out the reaction [protein]-peptidylproline (omega=180) = [protein]-peptidylproline (omega=0). Inhibited by both FK506 and rapamycin. Functionally, PPIases accelerate the folding of proteins. It catalyzes the cis-trans isomerization of proline imidic peptide bonds in oligopeptides. The sequence is that of FK506-binding protein 2 (fkbB) from Emericella nidulans (strain FGSC A4 / ATCC 38163 / CBS 112.46 / NRRL 194 / M139) (Aspergillus nidulans).